Consider the following 284-residue polypeptide: MVLMIVSGRSGSGKSVALRALEDMGFYCVDNLPVVLLPELARTLSERQISAAVSIDVRNMPESPEVFEQAMNNLPDAFSPQLLFLDADRNTLIRRYSDTRRLHPLSSKNLSLESAIDEENDLLEPLRSRADLIVDTSEMSVHELAEMLRTRLLGKRERELTMVFESFGFKHGIPIDADYVFDVRFLPNPHWDPKLRPMTGLDKPVAAFLDRHTEVHNFIYQTRSYLELWLPMLETNNRSYLTVAIGCTGGKHRSVYIAEQLADYFRSRGKNVQSRHRTLEKRKS.

8 to 15 (GRSGSGKS) serves as a coordination point for ATP. 56–59 (DVRN) serves as a coordination point for GTP. The interval 266–284 (RSRGKNVQSRHRTLEKRKS) is RNA-binding.

The protein belongs to the RapZ-like family. RapZ subfamily. In terms of assembly, homotrimer.

Its function is as follows. Modulates the synthesis of GlmS, by affecting the processing and stability of the regulatory small RNA GlmZ. When glucosamine-6-phosphate (GlcN6P) concentrations are high in the cell, RapZ binds GlmZ and targets it to cleavage by RNase E. Consequently, GlmZ is inactivated and unable to activate GlmS synthesis. Under low GlcN6P concentrations, RapZ is sequestered and inactivated by an other regulatory small RNA, GlmY, preventing GlmZ degradation and leading to synthesis of GlmS. The chain is RNase adapter protein RapZ from Cronobacter sakazakii (strain ATCC BAA-894) (Enterobacter sakazakii).